The following is a 1788-amino-acid chain: Laminin subunit beta-1 (1788 aa).

Positions 1–24 (MLELRLIVVIVLALLSWQWDPVDS) are cleaved as a signal peptide. The tract at residues 23-43 (DSQRPPQHGRRDRPKYPPNKF) is disordered. Positions 50–287 (ERSSCYPATG…GISNMVVRGS (238 aa)) constitute a Laminin N-terminal domain. 3 N-linked (GlcNAc...) asparagine glycosylation sites follow: N138, N201, and N232. 19 disulfides stabilise this stretch: C288/C297, C290/C318, C320/C329, C332/C352, C355/C364, C357/C382, C385/C394, C397/C415, C418/C431, C420/C446, C448/C457, C460/C475, C478/C491, C480/C498, C500/C509, C512/C526, C529/C541, C531/C548, and C550/C559. 4 Laminin EGF-like domains span residues 288–354 (CSCY…ACKK), 355–417 (CECN…VCQP), 418–477 (CDCD…GCEP), and 478–528 (CTCN…GCSL). The N-linked (GlcNAc...) asparagine glycan is linked to N487. A Laminin EGF-like 5; truncated domain is found at 529 to 559 (CNCDAGGSYDNYCDVISGQCRCRPHMTGRSC). Residues 567 to 783 (FIPLLPEVHE…LDNILSVFVH (217 aa)) form the Laminin IV type B domain. N-linked (GlcNAc...) asparagine glycosylation is present at N591. The short motif at 641-643 (RGD) is the Cell attachment site element. Cystine bridges form between C789-C801, C791-C808, C810-C819, C822-C834, C837-C849, C839-C856, C858-C867, C870-C880, C883-C892, C885-C899, C902-C911, C914-C930, C933-C949, C935-C960, C962-C971, C974-C988, C991-C1005, C993-C1012, C1015-C1024, C1027-C1040, C1043-C1057, C1045-C1064, C1066-C1075, C1078-C1091, C1094-C1106, C1096-C1113, C1115-C1124, C1127-C1139, C1142-C1154, C1144-C1161, C1163-C1172, and C1175-C1186. Laminin EGF-like domains follow at residues 789–836 (CNCN…GCKA), 837–882 (CDCN…ECRV), 883–932 (CQCN…GCRP), 933–990 (CRCP…TCSK), 991–1042 (CECS…NCQQ), 1043–1093 (CECD…GCES), 1094–1141 (CNCD…KCQP), and 1142–1188 (CECD…HCSP). The N-linked (GlcNAc...) asparagine glycan is linked to N1051. Residues 1189 to 1405 (CGECFNNWDL…SQIPELNNQV (217 aa)) are domain II. Residues N1246, N1301, N1330, and N1341 are each glycosylated (N-linked (GlcNAc...) asparagine). Residues 1255 to 1405 (EKLDYETQSL…SQIPELNNQV (151 aa)) are a coiled coil. Positions 1406–1432 (CGKPGDPCDSLCGGAGCGHCGGFLSCE) are domain alpha. Positions 1433 to 1788 (HGAKTHSEEA…RGSHYRQCYT (356 aa)) are domain I. Residues 1453 to 1505 (ITSKKDQADQTIRALTQAKLNASEAYEKAKRGFEQSERYLNQTNANIKLAENL) adopt a coiled-coil conformation. Residues N1473, N1493, and N1515 are each glycosylated (N-linked (GlcNAc...) asparagine). Residues 1540–1561 (EEIETLGDQINRAVSSLKNVEA) adopt a coiled-coil conformation. 3 N-linked (GlcNAc...) asparagine glycosylation sites follow: N1581, N1644, and N1703. Positions 1608 to 1762 (QGKAKDAIQQ…QQLLRLQAEI (155 aa)) form a coiled coil. The segment at 1690-1719 (GEANNLQSATSATNQTLTDRASRSENARER) is disordered. Polar residues predominate over residues 1693–1708 (NNLQSATSATNQTLTD). The segment covering 1709 to 1719 (RASRSENARER) has biased composition (basic and acidic residues).

As to quaternary structure, laminin is a complex glycoprotein, consisting of three different polypeptide chains (alpha, beta, gamma), which are bound to each other by disulfide bonds into a cross-shaped molecule comprising one long and three short arms with globules at each end. As to expression, found in the basement membranes (major component).

The protein localises to the secreted. It is found in the extracellular space. Its subcellular location is the extracellular matrix. The protein resides in the basement membrane. Its function is as follows. Binding to cells via a high affinity receptor, laminin is thought to mediate the attachment, migration and organization of cells into tissues during embryonic development by interacting with other extracellular matrix components. Required for Ndg localization to the basement membrane. This is Laminin subunit beta-1 (LanB1) from Drosophila melanogaster (Fruit fly).